Reading from the N-terminus, the 434-residue chain is Alpha-enolase (434 aa).

Serine 40 is a binding site for Mg(2+). 2 residues coordinate substrate: histidine 158 and glutamate 167. Glutamate 210 acts as the Proton donor in catalysis. Residues aspartate 245, glutamate 293, and aspartate 318 each coordinate Mg(2+). 2 residues coordinate substrate: glutamate 293 and aspartate 318. Lysine 343 acts as the Proton acceptor in catalysis. Substrate contacts are provided by residues serine 370–serine 373 and lysine 394.

The protein belongs to the enolase family. In terms of assembly, homodimer. The cofactor is Mg(2+).

It localises to the cytoplasm. It carries out the reaction (2R)-2-phosphoglycerate = phosphoenolpyruvate + H2O. It participates in carbohydrate degradation; glycolysis; pyruvate from D-glyceraldehyde 3-phosphate: step 4/5. This chain is Alpha-enolase, found in Python regius (Ball python).